A 177-amino-acid chain; its full sequence is Large ribosomal subunit protein bL9 (177 aa).

Residues Val-151–Ala-177 are disordered.

It belongs to the bacterial ribosomal protein bL9 family.

In terms of biological role, binds to the 23S rRNA. The sequence is that of Large ribosomal subunit protein bL9 from Maridesulfovibrio salexigens (strain ATCC 14822 / DSM 2638 / NCIMB 8403 / VKM B-1763) (Desulfovibrio salexigens).